We begin with the raw amino-acid sequence, 578 residues long: MSKIVAVTAGAKGVAHTHLAAEALSATAQALGHQIRVERHSAEGVEAPLQGAEIAAADVVLIAADLRIEDVRFVTKPVYRTSTARAVTQTAAVLAEALALTGEETPQMTTDTGQRPLRVVAITSCPTGIAHTFMAADALKKTAAARGWEIAVETQGSVGSQNALSAAQIQAADLVVIAADTHVDDSRFAGKKVYKTSVGAAVKGAAKVLDAALAEGVVLGTNLADTVDALKAQRAATRSGPYMHLLTGVSYMLPLVVAGGLLIALSFVFGIKAFEVEGTLPAALMAIGGGAAFKLMVPVLAGFIAYSIADRPGLTPGLIGGMLAVNLNAGFLGGIVAGFLAGYVARWLRDAIKLPRTLEGLKPVLILPLLSTAITGLIMVYVVGTPVAAILAAMTAFLQGLGTTNAVVLGLILGGMMAVDMGGPINKAAYTFAVGLLTSSTYAPMAAVMAAGMTPPLGLALATLVAKNRFTAEEREAGGAAAVLGLSFITEGAIPFAAKDPARVIPSIIVGSAITGALSMALGCLLVAPHGGIFVLAIPHAVTNLGLYALSIVVGTLVTTGLLIALKKPIPAEERARS.

PTS EIIB type-2 domains follow at residues 1–99 and 119–214; these read MSKI…EALA and VVAI…AALA. C125 functions as the Phosphocysteine intermediate; for EIIB activity in the catalytic mechanism. A Phosphocysteine; by EIIA modification is found at C125. Residues 241 to 576 form the PTS EIIC type-2 domain; that stretch reads PYMHLLTGVS…KKPIPAEERA (336 aa). A run of 9 helical transmembrane segments spans residues 251 to 271, 284 to 304, 319 to 339, 364 to 384, 405 to 425, 428 to 450, 477 to 497, 518 to 538, and 545 to 565; these read YMLP…VFGI, LMAI…AGFI, IGGM…VAGF, VLIL…YVVG, NAVV…GGPI, AAYT…AVMA, AGGA…IPFA, LSMA…VLAI, and LGLY…LLIA.

Its subcellular location is the cell inner membrane. The enzyme catalyses D-fructose(out) + N(pros)-phospho-L-histidyl-[protein] = D-fructose 1-phosphate(in) + L-histidyl-[protein]. Its function is as follows. The phosphoenolpyruvate-dependent sugar phosphotransferase system (sugar PTS), a major carbohydrate active transport system, catalyzes the phosphorylation of incoming sugar substrates concomitantly with their translocation across the cell membrane. The enzyme II FruAB PTS system is involved in fructose transport. In Rhodobacter capsulatus (Rhodopseudomonas capsulata), this protein is PTS system fructose-specific EIIB'BC component.